The chain runs to 538 residues: Cryptic outer membrane porin BglH (538 aa).

The signal sequence occupies residues 1-25 (MFRRNLITSAILLMAPLAFSAQSLA). A disordered region spans residues 52–82 (KDEEKKKYTPATVNRSVSTNDQGYAANPFPT). Positions 62–73 (ATVNRSVSTNDQ) are enriched in polar residues.

This sequence belongs to the porin LamB (TC 1.B.3) family. In terms of assembly, homomonomer; no physical evidence of a homotrimer has been found, however conductance experiments suggest it may be a homotrimer. The monomer probably consists of 18 antiparallel beta-strands.

The protein localises to the cell outer membrane. Functionally, part of a cryptic operon that is poorly expressed in vivo. May be an ancestral sugar porin with a broad carbohydrate specificity; it binds aromatic beta-D-glucosides such as arbutin and salicin, but with low affinity compared to the binding of maltooligosaccharides to the LamB porin. This chain is Cryptic outer membrane porin BglH (bglH), found in Escherichia coli (strain K12).